We begin with the raw amino-acid sequence, 385 residues long: uncharacterized protein (385 aa).

Lys194 is subject to N6-(pyridoxal phosphate)lysine.

Belongs to the class-V pyridoxal-phosphate-dependent aminotransferase family. Requires pyridoxal 5'-phosphate as cofactor.

This is an uncharacterized protein from Methanocaldococcus jannaschii (strain ATCC 43067 / DSM 2661 / JAL-1 / JCM 10045 / NBRC 100440) (Methanococcus jannaschii).